The primary structure comprises 867 residues: V-set and immunoglobulin domain-containing protein 10-like (867 aa).

Positions 1-27 are cleaved as a signal peptide; it reads MDNPQALPLFLLLASLVGILTLRASSG. Residues 28–776 are Extracellular-facing; that stretch reads LQQTNFSSAF…RAGPTLSHGA (749 aa). Asn32 carries an N-linked (GlcNAc...) asparagine glycan. Positions 35–45 are enriched in low complexity; it reads SAFSSDSKSSS. A disordered region spans residues 35–60; sequence SAFSSDSKSSSQGLGVEVPSIKPPSW. Asn88, Asn96, and Asn144 each carry an N-linked (GlcNAc...) asparagine glycan. The segment at 104–186 is disordered; that stretch reads LSPVSPFSET…PESKFSAETH (83 aa). A compositionally biased stretch (polar residues) spans 137–153; that stretch reads TVKTPASNISTQVSHTK. Residues 159 to 170 show a composition bias toward basic and acidic residues; sequence PDSKFSPDDMDL. Residues 173-186 are compositionally biased toward polar residues; that stretch reads SAQSPESKFSAETH. Ig-like C2-type domains follow at residues 302–394 and 402–487; these read PQLS…ADVS and PTIT…SLLN. Residues Cys324 and Cys378 are joined by a disulfide bond. N-linked (GlcNAc...) asparagine glycosylation is present at Asn423. An intrachain disulfide couples Cys428 to Cys471. N-linked (GlcNAc...) asparagine glycosylation occurs at Asn487. Residues 602-627 are disordered; sequence ASGCPPPSRASWAREGRPLAPGGGSR. 2 N-linked (GlcNAc...) asparagine glycosylation sites follow: Asn641 and Asn650. Residues 777-797 form a helical membrane-spanning segment; it reads IAGIVLGSLLGLALLAVLLLL. Topologically, residues 798 to 867 are cytoplasmic; the sequence is CICCLCRFRG…QAQTPVQLSL (70 aa).

Expressed in the esophagus, particularly in the suprabasilar layers of the epithelium. Expression is largely reduced in esophageal metaplasia, dysplasia, and adenocarcinoma lesions.

The protein resides in the membrane. This chain is V-set and immunoglobulin domain-containing protein 10-like (VSIG10L), found in Homo sapiens (Human).